A 546-amino-acid chain; its full sequence is MAQLAGQPVVILPEGTQRYVGRDAQRLNILAARIIAETVRTTLGPKGMDKMLVDSLGDIVITNDGATILDEMDIQHPAAKMMVEVAKTQDKEAGDGTTTAVVIAGELLRKAEELLDQNIHPSIIIKGYALAAEKAQEILDEIAKDVDVEDREILKKAAVTSITGKAAEEEREYLAEIAVEAVKQVAEKVGETYKVDLDNIKFEKKEGGSVKDTQLIKGVVIDKEVVHPGMPKRVEGAKIALINEALEVKETETDAEIRITSPEQLQAFLEQEEKMLREMVDKIKEVGANVVFVQKGIDDLAQHYLAKYGIMAVRRVKKSDMEKLAKATGAKIVTNVRDLTPEDLGEAELVEQRKVAGENMIFVEGCKNPKAVTILIRGGTEHVVDEVERALEDAVKVVKDIVEDGKIVAAGGAPEIELAIRLDEYAKEVGGKEQLAIEAFAEALKVIPRTLAENAGLDPIETLVKVIAAHKEKGPTIGVDVFEGEPADMLERGVIAPVRVPKQAIKSASEAAIMILRIDDVIAASKLEKDKEGGKGGSEDFGSDLD.

Belongs to the TCP-1 chaperonin family. As to quaternary structure, forms a Heterooligomeric complex of two stacked eight-membered rings.

In terms of biological role, molecular chaperone; binds unfolded polypeptides in vitro, and has a weak ATPase activity. The protein is Thermosome subunit beta (thsB) of Thermococcus kodakarensis (strain ATCC BAA-918 / JCM 12380 / KOD1) (Pyrococcus kodakaraensis (strain KOD1)).